A 159-amino-acid chain; its full sequence is Small ribosomal subunit protein uS7 (159 aa).

This sequence belongs to the universal ribosomal protein uS7 family. In terms of assembly, part of the 30S ribosomal subunit. Contacts proteins S9 and S11.

One of the primary rRNA binding proteins, it binds directly to 16S rRNA where it nucleates assembly of the head domain of the 30S subunit. Is located at the subunit interface close to the decoding center, probably blocks exit of the E-site tRNA. In Wolbachia pipientis wMel, this protein is Small ribosomal subunit protein uS7.